Consider the following 304-residue polypeptide: ATP phosphoribosyltransferase (304 aa).

This sequence belongs to the ATP phosphoribosyltransferase family. Long subfamily. Mg(2+) is required as a cofactor.

The protein resides in the cytoplasm. It catalyses the reaction 1-(5-phospho-beta-D-ribosyl)-ATP + diphosphate = 5-phospho-alpha-D-ribose 1-diphosphate + ATP. It participates in amino-acid biosynthesis; L-histidine biosynthesis; L-histidine from 5-phospho-alpha-D-ribose 1-diphosphate: step 1/9. With respect to regulation, feedback inhibited by histidine. Functionally, catalyzes the condensation of ATP and 5-phosphoribose 1-diphosphate to form N'-(5'-phosphoribosyl)-ATP (PR-ATP). Has a crucial role in the pathway because the rate of histidine biosynthesis seems to be controlled primarily by regulation of HisG enzymatic activity. The polypeptide is ATP phosphoribosyltransferase (Xanthomonas campestris pv. campestris (strain B100)).